A 38-amino-acid polypeptide reads, in one-letter code: uncharacterized protein (38 aa).

This is an uncharacterized protein from Archaeoglobus fulgidus (strain ATCC 49558 / DSM 4304 / JCM 9628 / NBRC 100126 / VC-16).